Here is a 131-residue protein sequence, read N- to C-terminus: Large ribosomal subunit protein eL32 (131 aa).

Belongs to the eukaryotic ribosomal protein eL32 family. In terms of assembly, component of the large ribosomal subunit. Mature ribosomes consist of a small (40S) and a large (60S) subunit. The 40S subunit contains about 32 different proteins and 1 molecule of RNA (18S). The 60S subunit contains 45 different proteins and 3 molecules of RNA (25S, 5.8S and 5S).

Its subcellular location is the cytoplasm. Functionally, component of the ribosome, a large ribonucleoprotein complex responsible for the synthesis of proteins in the cell. The small ribosomal subunit (SSU) binds messenger RNAs (mRNAs) and translates the encoded message by selecting cognate aminoacyl-transfer RNA (tRNA) molecules. The large subunit (LSU) contains the ribosomal catalytic site termed the peptidyl transferase center (PTC), which catalyzes the formation of peptide bonds, thereby polymerizing the amino acids delivered by tRNAs into a polypeptide chain. The nascent polypeptides leave the ribosome through a tunnel in the LSU and interact with protein factors that function in enzymatic processing, targeting, and the membrane insertion of nascent chains at the exit of the ribosomal tunnel. The chain is Large ribosomal subunit protein eL32 from Candida albicans (strain SC5314 / ATCC MYA-2876) (Yeast).